Here is a 195-residue protein sequence, read N- to C-terminus: Holliday junction branch migration complex subunit RuvA (195 aa).

The domain I stretch occupies residues 1–66 (MNYLIFKVIY…LIIKDLYGFR (66 aa)). The tract at residues 67-141 (TYNERLLFID…KYINKVNDKN (75 aa)) is domain II. Position 141 (N141) is a region of interest, flexible linker. The tract at residues 141–195 (NNWAKELSIGLENLGYTKKDIEYAITKVKINSQQDIDISEIISSAIKEISLRHEN) is domain III.

This sequence belongs to the RuvA family. Homotetramer. Forms an RuvA(8)-RuvB(12)-Holliday junction (HJ) complex. HJ DNA is sandwiched between 2 RuvA tetramers; dsDNA enters through RuvA and exits via RuvB. An RuvB hexamer assembles on each DNA strand where it exits the tetramer. Each RuvB hexamer is contacted by two RuvA subunits (via domain III) on 2 adjacent RuvB subunits; this complex drives branch migration. In the full resolvosome a probable DNA-RuvA(4)-RuvB(12)-RuvC(2) complex forms which resolves the HJ.

The protein resides in the cytoplasm. Its function is as follows. The RuvA-RuvB-RuvC complex processes Holliday junction (HJ) DNA during genetic recombination and DNA repair, while the RuvA-RuvB complex plays an important role in the rescue of blocked DNA replication forks via replication fork reversal (RFR). RuvA specifically binds to HJ cruciform DNA, conferring on it an open structure. The RuvB hexamer acts as an ATP-dependent pump, pulling dsDNA into and through the RuvAB complex. HJ branch migration allows RuvC to scan DNA until it finds its consensus sequence, where it cleaves and resolves the cruciform DNA. The polypeptide is Holliday junction branch migration complex subunit RuvA (Ureaplasma parvum serovar 3 (strain ATCC 27815 / 27 / NCTC 11736)).